Consider the following 64-residue polypeptide: MVWLNGEPRPLEGKTLKEVLEEMGVELKGVAVLLNEEAFLGLEVPDRPLRDGDVVEVVALMQGG.

The residue at position 64 (Gly64) is a 1-thioglycine; alternate. Gly64 is modified (glycyl adenylate; alternate). Residue Gly64 forms a Glycyl cysteine thioester (Gly-Cys) (interchain with C-192 in TtuC); alternate linkage.

This sequence belongs to the sulfur carrier protein ThiS family. C-terminal thiocarboxylation occurs in 2 steps, it is first acyl-adenylated (-COAMP) by TtuC, then thiocarboxylated (-COSH) by the cysteine desulfurases IscS or SufS.

It participates in cofactor biosynthesis; thiamine diphosphate biosynthesis. Its function is as follows. Is the sulfur donor in the synthesis of the thiazole phosphate moiety of thiamine phosphate. In Thermus thermophilus (strain ATCC BAA-163 / DSM 7039 / HB27), this protein is Sulfur carrier protein ThiS.